The primary structure comprises 374 residues: 2-aminoethylphosphonate--pyruvate transaminase 1 (374 aa).

Position 195 is an N6-(pyridoxal phosphate)lysine (Lys-195).

The protein belongs to the class-V pyridoxal-phosphate-dependent aminotransferase family. PhnW subfamily. In terms of assembly, homodimer. It depends on pyridoxal 5'-phosphate as a cofactor.

The enzyme catalyses (2-aminoethyl)phosphonate + pyruvate = phosphonoacetaldehyde + L-alanine. Functionally, involved in phosphonate degradation. The sequence is that of 2-aminoethylphosphonate--pyruvate transaminase 1 from Polaromonas sp. (strain JS666 / ATCC BAA-500).